The sequence spans 118 residues: Small ribosomal subunit protein uS13 (118 aa).

Residues 94–118 (GLPLRGQRTRTNARTRKGPRKAIRK) are disordered.

It belongs to the universal ribosomal protein uS13 family. As to quaternary structure, part of the 30S ribosomal subunit. Forms a loose heterodimer with protein S19. Forms two bridges to the 50S subunit in the 70S ribosome.

In terms of biological role, located at the top of the head of the 30S subunit, it contacts several helices of the 16S rRNA. In the 70S ribosome it contacts the 23S rRNA (bridge B1a) and protein L5 of the 50S subunit (bridge B1b), connecting the 2 subunits; these bridges are implicated in subunit movement. Contacts the tRNAs in the A and P-sites. This chain is Small ribosomal subunit protein uS13, found in Xanthomonas axonopodis pv. citri (strain 306).